The primary structure comprises 385 residues: Cytochrome b (385 aa).

Transmembrane regions (helical) follow at residues 32-52, 76-98, 113-133, and 179-199; these read FGAL…FLAM, WLIR…IHVF, LWNL…LGYV, and FFSL…IHVA. Heme b contacts are provided by histidine 82 and histidine 96. The heme b site is built by histidine 183 and histidine 197. Position 202 (histidine 202) interacts with a ubiquinone. 4 consecutive transmembrane segments (helical) span residues 226-246, 290-310, 322-342, and 349-369; these read FIFK…YAVF, LGGV…PFIT, SKTI…WIGF, and YLML…SLAV.

The protein belongs to the cytochrome b family. As to quaternary structure, the main subunits of complex b-c1 are: cytochrome b, cytochrome c1 and the Rieske protein. The cofactor is heme b.

The protein resides in the mitochondrion inner membrane. Its function is as follows. Component of the ubiquinol-cytochrome c reductase complex (complex III or cytochrome b-c1 complex) that is part of the mitochondrial respiratory chain. The b-c1 complex mediates electron transfer from ubiquinol to cytochrome c. Contributes to the generation of a proton gradient across the mitochondrial membrane that is then used for ATP synthesis. The sequence is that of Cytochrome b (MT-CYB) from Acanthamoeba castellanii (Amoeba).